A 719-amino-acid polypeptide reads, in one-letter code: Protein STRUBBELIG-RECEPTOR FAMILY 6 (719 aa).

The signal sequence occupies residues 1-29 (MRENWAVVALFTLCIVGFELRFIHGATDA). Residues 30–293 (SDTSALNTLF…SKKSGIGAGA (264 aa)) are Extracellular-facing. LRR repeat units follow at residues 97 to 118 (SLTE…QFPP), 119 to 140 (NLQR…SLSQ), 143 to 164 (PLKY…DFSK), 167 to 190 (SLTT…SSLT), 191 to 213 (SLKS…AGLP), and 214 to 234 (LETL…SLKG). Positions 242–287 (NSFNTGPAPPPPPGTPPIRGSPSRKSGGRESRSSDESTRNGDSKKS) are disordered. Residues 248–257 (PAPPPPPGTP) are compositionally biased toward pro residues. Over residues 268–286 (GGRESRSSDESTRNGDSKK) the composition is skewed to basic and acidic residues. Residues 294–314 (IAGIIISLLVVTALLVAFFLF) traverse the membrane as a helical segment. Topologically, residues 315 to 719 (RRKKSKRSSP…GSADTTSDYM (405 aa)) are cytoplasmic. 2 disordered regions span residues 322 to 355 (SSPM…SSVE) and 364 to 383 (SINL…DEDS). A compositionally biased stretch (polar residues) spans 332–354 (NQPFTLASNDFHENNSIQSSSSV). Ser-377 is modified (phosphoserine). The Protein kinase domain occupies 416–690 (FSVDNLLGEG…SEVVQALVVL (275 aa)). ATP is bound by residues 422 to 430 (LGEGTFGRV) and Lys-444. Residues 700-719 (TVGVDPSQRAGSADTTSDYM) are disordered. A compositionally biased stretch (polar residues) spans 708-719 (RAGSADTTSDYM).

This sequence belongs to the protein kinase superfamily. Ser/Thr protein kinase family. Expressed in seedlings, roots, stems, leaves, flowers and siliques.

It localises to the membrane. The polypeptide is Protein STRUBBELIG-RECEPTOR FAMILY 6 (SRF6) (Arabidopsis thaliana (Mouse-ear cress)).